The primary structure comprises 324 residues: NAD(P)H-dependent D-xylose reductase I,II (324 aa).

The active-site Proton donor is Tyr54. His116 provides a ligand contact to substrate. NAD(+)-binding positions include 171 to 172 (SN), 220 to 229 (SSFGPQSFLE), and 276 to 286 (KSNNPERLAQN).

It belongs to the aldo/keto reductase family.

It catalyses the reaction xylitol + NAD(+) = D-xylose + NADH + H(+). It carries out the reaction xylitol + NADP(+) = D-xylose + NADPH + H(+). Its pathway is carbohydrate metabolism; D-xylose degradation. In terms of biological role, reduces D-xylose into xylitol. Has a preference for NADPH, but can also utilize NADH as cosubstrate. This Candida tropicalis (Yeast) protein is NAD(P)H-dependent D-xylose reductase I,II (xyrA).